The following is a 42-amino-acid chain: MTKRTLEGTKRKSIRKSGFRARMATKLGRKVLNKRRQKGENS.

This sequence belongs to the bacterial ribosomal protein bL34 family.

The protein resides in the plastid. It localises to the chloroplast. This chain is Large ribosomal subunit protein bL34c (rpl34), found in Olisthodiscus luteus (Marine phytoflagellate).